The sequence spans 426 residues: Anaerobic glycerol-3-phosphate dehydrogenase subunit B (426 aa).

The protein belongs to the anaerobic G-3-P dehydrogenase subunit B family. As to quaternary structure, composed of a catalytic GlpA/B dimer and of membrane bound GlpC. Requires FMN as cofactor.

The catalysed reaction is a quinone + sn-glycerol 3-phosphate = dihydroxyacetone phosphate + a quinol. It functions in the pathway polyol metabolism; glycerol degradation via glycerol kinase pathway; glycerone phosphate from sn-glycerol 3-phosphate (anaerobic route): step 1/1. Its function is as follows. Conversion of glycerol 3-phosphate to dihydroxyacetone. Uses fumarate or nitrate as electron acceptor. This chain is Anaerobic glycerol-3-phosphate dehydrogenase subunit B, found in Haemophilus ducreyi (strain 35000HP / ATCC 700724).